We begin with the raw amino-acid sequence, 212 residues long: Pyridoxine/pyridoxamine 5'-phosphate oxidase (212 aa).

Substrate is bound by residues 9-12 (RKSY) and K67. FMN is bound by residues 62 to 67 (RIVLIK), 77 to 78 (FT), R83, and K84. Residues Y124, R128, and S132 each contribute to the substrate site. Residues 141-142 (QS) and W185 contribute to the FMN site. 191–193 (RLH) is a substrate binding site. R195 provides a ligand contact to FMN.

The protein belongs to the pyridoxamine 5'-phosphate oxidase family. As to quaternary structure, homodimer. FMN serves as cofactor.

It carries out the reaction pyridoxamine 5'-phosphate + O2 + H2O = pyridoxal 5'-phosphate + H2O2 + NH4(+). It catalyses the reaction pyridoxine 5'-phosphate + O2 = pyridoxal 5'-phosphate + H2O2. Its pathway is cofactor metabolism; pyridoxal 5'-phosphate salvage; pyridoxal 5'-phosphate from pyridoxamine 5'-phosphate: step 1/1. It participates in cofactor metabolism; pyridoxal 5'-phosphate salvage; pyridoxal 5'-phosphate from pyridoxine 5'-phosphate: step 1/1. Functionally, catalyzes the oxidation of either pyridoxine 5'-phosphate (PNP) or pyridoxamine 5'-phosphate (PMP) into pyridoxal 5'-phosphate (PLP). The chain is Pyridoxine/pyridoxamine 5'-phosphate oxidase from Verminephrobacter eiseniae (strain EF01-2).